The following is a 544-amino-acid chain: Cytochrome P450 monooxygenase tenB (544 aa).

The helical transmembrane segment at 13 to 33 (LGYYEKVTGILGVVSIILLFW) threads the bilayer. Over residues 438-448 (FDPFRFSRASK) the composition is skewed to basic and acidic residues. Residues 438–467 (FDPFRFSRASKDDDDDDDDDGRSTSSHTKD) are disordered. A heme-binding site is contributed by C486.

The protein belongs to the cytochrome P450 family. The cofactor is heme.

Its subcellular location is the membrane. Its pathway is secondary metabolite biosynthesis. Its function is as follows. Cytochrome P450 monooxygenase; part of the gene cluster that mediates the biosynthesis of tenellin-type 2-pyridones, iron-chelating compounds involved in iron stress tolerance, competition with the natural competitor fungus Metarhizium robertsii and insect hosts infection. TenB catalyzes the selective N-hydroxylation of the 2-pyridone nitrogen of yield tellinin and 15-hydroxytellenin (15-HT), respectively. The pathway begins with the assembly of the polyketide-amino acid backbone by the hybrid PKS-NRPS tenS with the help of the enoyl reductase tenC. These enzymes catalyze the synthesis of the pyrrolidine-2-dione intermediates pretellinin A, 11-hydropretellenin A, 12-hydropretellenin A, 13-hydropretellenin A, 14-hydropretellenin A, 12-oxopretellenin A and prototellinin D. The cytochrome P450 monooxygenase tenA then catalyzes an oxidative ring expansion of pretenellin A and 14-hydropretellenin A to form the 2-pyridone core, leading to pretenellin B and pyridovericin, respectively. The cytochrome P450 monooxygenase tenB is then required for the selective N-hydroxylation of the 2-pyridone nitrogen of yield tellinin and 15-hydroxytellenin (15-HT), respectively. The UDP-glucosyltransferase GT1 and the methyltransferase MT1, located outside the tenS gene cluster, contribute to the stepwise glycosylation and methylation of 15-HT to obtain the glycoside pyridovericin-N-O-(4-O-methyl-beta-D-glucopyranoside) (PMGP). Additional related compounds such as 1-O-methyl-15-HT, (8Z)-1-O-methyl-15-HT, and O-methyltenellin A are also produced but the enzymes involved in their biosynthesis have still to be determined. This chain is Cytochrome P450 monooxygenase tenB, found in Beauveria bassiana (strain ARSEF 2860) (White muscardine disease fungus).